The sequence spans 234 residues: DNA repair protein RecO (234 aa).

It belongs to the RecO family.

Functionally, involved in DNA repair and RecF pathway recombination. In Hamiltonella defensa subsp. Acyrthosiphon pisum (strain 5AT), this protein is DNA repair protein RecO.